We begin with the raw amino-acid sequence, 152 residues long: MGKAVVVLSSSEGVSGTVYFAQEGDGPTTVTGNVSGLKPGLHGFHVHALGDTTNGCMSTGPHYNPNGKEHGAPEDDVRHAGDLGNITVGDDGTATFTIIDSQIPLSGPNSIVGRAVVVHAEPDDLGRGGHELSKTTGNAGGRVACGIIGLQG.

Residues H45, H47, and H62 each contribute to the Cu cation site. C56 and C145 are disulfide-bonded. Residues H62, H70, H79, and D82 each coordinate Zn(2+). Residue H119 coordinates Cu cation.

This sequence belongs to the Cu-Zn superoxide dismutase family. Homodimer. Requires Cu cation as cofactor. Zn(2+) serves as cofactor.

Its subcellular location is the cytoplasm. It catalyses the reaction 2 superoxide + 2 H(+) = H2O2 + O2. Its function is as follows. Destroys radicals which are normally produced within the cells and which are toxic to biological systems. The sequence is that of Superoxide dismutase [Cu-Zn] (SODCC) from Spinacia oleracea (Spinach).